A 248-amino-acid polypeptide reads, in one-letter code: Adenosylcobinamide-GDP ribazoletransferase (248 aa).

7 helical membrane-spanning segments follow: residues E24–W44, I70–S90, V106–L126, I134–A154, I168–L188, G189–I209, and A228–I248.

The protein belongs to the CobS family. Mg(2+) is required as a cofactor.

Its subcellular location is the cell membrane. The catalysed reaction is alpha-ribazole + adenosylcob(III)inamide-GDP = adenosylcob(III)alamin + GMP + H(+). It catalyses the reaction alpha-ribazole 5'-phosphate + adenosylcob(III)inamide-GDP = adenosylcob(III)alamin 5'-phosphate + GMP + H(+). It participates in cofactor biosynthesis; adenosylcobalamin biosynthesis; adenosylcobalamin from cob(II)yrinate a,c-diamide: step 7/7. Joins adenosylcobinamide-GDP and alpha-ribazole to generate adenosylcobalamin (Ado-cobalamin). Also synthesizes adenosylcobalamin 5'-phosphate from adenosylcobinamide-GDP and alpha-ribazole 5'-phosphate. In Listeria monocytogenes serotype 4b (strain F2365), this protein is Adenosylcobinamide-GDP ribazoletransferase.